A 1076-amino-acid polypeptide reads, in one-letter code: Nickel-cobalt-cadmium resistance protein NccA (1076 aa).

Helical transmembrane passes span 14–34, 367–387, 391–411, 419–439, 476–496, 503–523, 562–582, 904–924, 929–949, 960–980, 1004–1024, and 1036–1056; these read WLVLFLTAVVGAIGAWQLNLL, VAKNLVEGAALVVVILFALLG, AAVIAALVIPLSLLISAIGMN, LMSLGALDFGLIIDGAVIIVE, TVYGQLVIFMVFLPCLTFQGV, PMVITLMLALASAFVLSLTFV, MPFLGAALVTLALAAMAFTFV, LAIIVPLCFILIAATLYMAIG, TATVLTAVPLALAGGVFALVL, VGFIAVSGVAVLNGLVLISAI, PVLMTALVASLGFVPMAIATG, and VVIGGLITATVLTLFVLPAVC.

Belongs to the resistance-nodulation-cell division (RND) (TC 2.A.6) family.

Its subcellular location is the cell membrane. In terms of biological role, component of the NCC cation-efflux system that confers resistance to nickel, cobalt and cadmium. May form a membrane tunnel, which allows ion transport across the membrane. The protein is Nickel-cobalt-cadmium resistance protein NccA (nccA) of Alcaligenes xylosoxydans xylosoxydans (Achromobacter xylosoxidans).